The primary structure comprises 120 residues: Autophagy-related protein 8d (120 aa).

Residue glycine 117 is the site of Phosphatidylethanolamine amidated glycine attachment. Residues 118-120 (IFF) constitute a propeptide, removed in mature form.

This sequence belongs to the ATG8 family. As to quaternary structure, interacts with ATG4B. Interacts with NBR1. In terms of processing, the C-terminal 3 residues are removed by ATG4 to expose Gly-117 at the C-terminus. This Gly-117 forms then a thioester bond with the 'Cys-558' of ATG7 (E1-like activating enzyme) before being transferred to the 'Cys-258' of ATG3 (the specific E2 conjugating enzyme), in order to be finally amidated with phosphatidylethanolamine. This lipid modification anchors ATG8 to autophagosomes. In terms of tissue distribution, constitutively expressed.

The protein localises to the cytoplasmic vesicle. It is found in the autophagosome membrane. The protein resides in the vacuole membrane. It localises to the cytoplasm. Its subcellular location is the cytoskeleton. Its function is as follows. Ubiquitin-like modifier involved in autophagosomes formation. May mediate the delivery of the autophagosomes to the vacuole via the microtubule cytoskeleton. The chain is Autophagy-related protein 8d (ATG8D) from Arabidopsis thaliana (Mouse-ear cress).